Here is a 100-residue protein sequence, read N- to C-terminus: Small ribosomal subunit protein uS14c (100 aa).

This sequence belongs to the universal ribosomal protein uS14 family. As to quaternary structure, part of the 30S ribosomal subunit.

The protein localises to the plastid. It is found in the chloroplast. In terms of biological role, binds 16S rRNA, required for the assembly of 30S particles. The polypeptide is Small ribosomal subunit protein uS14c (Ostreococcus tauri).